The chain runs to 378 residues: Fructose-1,6-bisphosphatase class 1 2 (378 aa).

Residues Glu98, Asp120, Leu122, and Asp123 each contribute to the Mg(2+) site. Substrate is bound by residues 123-126 and Asn227; that span reads DGSS. Residue Glu299 participates in Mg(2+) binding.

This sequence belongs to the FBPase class 1 family. In terms of assembly, homotetramer. Mg(2+) is required as a cofactor.

The protein resides in the cytoplasm. It catalyses the reaction beta-D-fructose 1,6-bisphosphate + H2O = beta-D-fructose 6-phosphate + phosphate. The protein operates within carbohydrate biosynthesis; gluconeogenesis. The protein is Fructose-1,6-bisphosphatase class 1 2 of Paraburkholderia xenovorans (strain LB400).